The chain runs to 335 residues: Taste receptor type 2 member 119 (335 aa).

Topologically, residues 1-7 are extracellular; it reads MMEGHML. The chain crosses the membrane as a helical span at residues 8-28; it reads FFLLVVVVQFLTGVLANGLIV. Residues 29-43 are Cytoplasmic-facing; sequence VVNAIDLIMWKKMAP. Residues 44-64 form a helical membrane-spanning segment; that stretch reads LDLLLFCLATSRIILQLCILF. Residues 65-81 lie on the Extracellular side of the membrane; sequence AQLGLSCLVRHTLFADN. An N-linked (GlcNAc...) asparagine glycan is attached at asparagine 81. The chain crosses the membrane as a helical span at residues 82–102; sequence VTFVYIINELSLWFATWLGVF. Residues 103 to 124 are Cytoplasmic-facing; sequence YCAKIATIPHPLFLWLKMRISR. The chain crosses the membrane as a helical span at residues 125–145; it reads LVPWLILASVVYVTVTTFIHS. Residues 146-176 lie on the Extracellular side of the membrane; the sequence is RETSELPKQIFISFFSKNTTRVRPAHATLLS. Asparagine 163 carries an N-linked (GlcNAc...) asparagine glycan. The chain crosses the membrane as a helical span at residues 177 to 197; it reads VFVFGLTLPFLIFTVAVLLLL. Topologically, residues 198 to 224 are cytoplasmic; the sequence is SSLWNHSRQMRTMVGTREPSRHALVSA. Residues 225–245 form a helical membrane-spanning segment; that stretch reads MLSILSFLILYLSHDMVAVLI. Residues 246 to 256 are Extracellular-facing; the sequence is CTQGLHFGSRT. The helical transmembrane segment at 257 to 277 threads the bilayer; sequence FAFCLLVIGMYPSLHSIVLIL. The Cytoplasmic segment spans residues 278 to 335; sequence GNPKLKRNAKTFIVHCKCCHCARAWVTSRNPRLSDLPVPATHHSANKTSCSEACIMPS.

The protein belongs to the G-protein coupled receptor T2R family. As to expression, expressed in subsets of taste receptor cells of the tongue and palate epithelium and exclusively in gustducin-positive cells. Expressed in 15% taste bud cells in circumvallate and foliate papillae but only in 2% in fungiform papillae. Expressed in the gastro and duodenal tissue. Not expressed in colon, liver, heart and kidney.

The protein resides in the membrane. In terms of biological role, gustducin-coupled receptor implicated in the perception of bitter compounds in the oral cavity and the gastrointestinal tract. Signals through PLCB2 and the calcium-regulated cation channel TRPM5. The sequence is that of Taste receptor type 2 member 119 (Tas2r119) from Mus musculus (Mouse).